The following is a 269-amino-acid chain: MGQEDMMSAAEDLADQFLRVTKQYLPHMARLCLISTFLEDGIRMWFQWSEQRDYIEATWSCGYFLATCFVIINLIGQIGGCVLVLSRNLVQYACFGLFCIIALQTVAYSILWDLKFLMRNLALGGGLLLLLAESRSEGKSMFAGVPSMGESSPKQYMQLGGRVLLVLMFMTLLHFDSDFFSILQNMVGTALIILVAVGFKTKLAALTLVVWLLAINVYFNAFWTVPAYKPMHDFLKYDFFQTTSVIGGLLLVVALGPGGVSMDEKKKEW.

Transmembrane regions (helical) follow at residues phenylalanine 64–valine 84, tyrosine 92–tryptophan 112, phenylalanine 179–phenylalanine 199, leucine 203–tryptophan 223, and threonine 242–methionine 262. Positions lysine 266–tryptophan 269 match the Di-lysine motif motif.

This sequence belongs to the SURF4 family.

The protein localises to the endoplasmic reticulum membrane. It is found in the endoplasmic reticulum-Golgi intermediate compartment membrane. The protein resides in the golgi apparatus membrane. Endoplasmic reticulum cargo receptor that mediates the export of lipoproteins by recruiting cargos into COPII vesicles to facilitate their secretion. The polypeptide is Surfeit locus protein 4 (Danio rerio (Zebrafish)).